Consider the following 428-residue polypeptide: Aspartate--tRNA(Asp) ligase (428 aa).

Glu166 serves as a coordination point for L-aspartate. An aspartate region spans residues 188–191 (QLYK). Arg210 serves as a coordination point for L-aspartate. ATP-binding positions include 210–212 (RAE), 218–220 (RHL), and Glu351. Mg(2+) is bound by residues Glu351 and Ser354. L-aspartate-binding residues include Ser354 and Arg358. 399–402 (GLER) serves as a coordination point for ATP.

It belongs to the class-II aminoacyl-tRNA synthetase family. Type 2 subfamily. As to quaternary structure, homodimer. It depends on Mg(2+) as a cofactor.

It is found in the cytoplasm. It carries out the reaction tRNA(Asp) + L-aspartate + ATP = L-aspartyl-tRNA(Asp) + AMP + diphosphate. In terms of biological role, catalyzes the attachment of L-aspartate to tRNA(Asp) in a two-step reaction: L-aspartate is first activated by ATP to form Asp-AMP and then transferred to the acceptor end of tRNA(Asp). In Thermoplasma volcanium (strain ATCC 51530 / DSM 4299 / JCM 9571 / NBRC 15438 / GSS1), this protein is Aspartate--tRNA(Asp) ligase.